Reading from the N-terminus, the 570-residue chain is Endo-1,4-beta-xylanase 5-like (570 aa).

The signal sequence occupies residues 1–23 (MNSIKNGFFLCMIFLLWCHVDSG). N-linked (GlcNAc...) asparagine glycosylation is found at Asn197, Asn261, and Asn307. The GH10 domain occupies 202 to 501 (KGVVISLKQT…TQTGDVIDKL (300 aa)). Glu332 functions as the Proton donor in the catalytic mechanism. N-linked (GlcNAc...) asparagine glycosylation is present at Asn346. Glu439 acts as the Nucleophile in catalysis. Asn490, Asn515, Asn537, and Asn545 each carry an N-linked (GlcNAc...) asparagine glycan.

This sequence belongs to the glycosyl hydrolase 10 (cellulase F) family.

It catalyses the reaction Endohydrolysis of (1-&gt;4)-beta-D-xylosidic linkages in xylans.. It functions in the pathway glycan degradation; xylan degradation. Binds to and hydrolyzes insoluble and soluble xylan substrates. The sequence is that of Endo-1,4-beta-xylanase 5-like from Arabidopsis thaliana (Mouse-ear cress).